We begin with the raw amino-acid sequence, 1734 residues long: Complement C4-A (1734 aa).

Positions 1–19 are cleaved as a signal peptide; the sequence is MRLLWGLAWVFSFCASSLQ. Cys-66 and Cys-95 are disulfide-bonded. An N-linked (GlcNAc...) asparagine glycan is attached at Asn-224. Cys-633 and Cys-667 form a disulfide bridge. Residues 674 to 677 constitute a propeptide that is removed on maturation; that stretch reads RQKR. 3 disulfides stabilise this stretch: Cys-700–Cys-726, Cys-701–Cys-733, and Cys-714–Cys-734. An Anaphylatoxin-like domain is found at 700-734; it reads CCQDGMTKLPMKRTCEQRAARVPQQACREPFLSCC. Asn-743 and Asn-859 each carry an N-linked (GlcNAc...) asparagine glycan. The isoglutamyl cysteine thioester (Cys-Gln) cross-link spans 1002–1005; sequence CAEQ. N-linked (GlcNAc...) asparagine glycans are attached at residues Asn-1128 and Asn-1383. Tyr-1409 carries the post-translational modification Sulfotyrosine. Residues 1437-1443 constitute a propeptide that is removed on maturation; it reads RRSRRRR. Intrachain disulfides connect Cys-1461-Cys-1525, Cys-1573-Cys-1578, Cys-1585-Cys-1663, Cys-1608-Cys-1732, and Cys-1708-Cys-1717. Positions 1585–1732 constitute an NTR domain; that stretch reads CPRLLRSLER…FLMEFSSRGC (148 aa).

As to quaternary structure, in absence of complement activation, circulates in blood as a disulfide-linked trimer of an alpha, beta and gamma chain. Complement C4b is composed of Complement C4b-A, Complement C4 beta and Complement C4 gamma chains that are associated via disulfide bonds. Non-enzymatic component of the C3 convertase, also named C4bC2b, composed of the serine protease complement C2b (C2), as well as complement C4b. Non-enzymatic component of the C5 convertase, also named C4bC2bC3b, composed of the serine protease complement C2b (C2), complement C3b, as well as complement C4b. Prior to secretion, the single-chain precursor is enzymatically cleaved by plasminogen (PLG) to yield non-identical chains alpha, beta and gamma. During activation of the complement systems, the alpha chain is cleaved into C4a and C4b by different proteases depending on the complement pathway: C4b stays linked to the beta and gamma chains, while C4a is released in the plasma. The alpha chain is cleaved by C1S to generate C4a and C4b following activation by the classical complement system. The alpha chain is cleaved to generate C4a and C4b by MASP2 following activation by the lectin complement system. The alpha chain is cleaved by GZMK to generate C4a and C4b following activation by the GZMK complement system. Further degradation of C4b by C1 into the inactive fragments C4c and C4d blocks the generation of C3 convertase. The proteolytic cleavages often are incomplete so that many structural forms can be found in plasma. In terms of processing, upon activation, the internal thioester bond reacts with carbohydrate antigens on the target surface to form amide or ester bonds, leading to covalent association with the surface of pathogens. Post-translationally, complement C4b interacts with complement C3b via a thioester linkage. N- and O-glycosylated. O-glycosylated with a core 1 or possibly core 8 glycan.

The protein localises to the secreted. Its subcellular location is the synapse. It localises to the cell projection. The protein resides in the axon. It is found in the dendrite. The protein localises to the cell surface. With respect to regulation, specifically inhibited by nanobody hC4Nb8, inhibiting the classical complement pathway. Its function is as follows. Precursor of non-enzymatic components of the classical, lectin and GZMK complement pathways, which consist in a cascade of proteins that leads to phagocytosis and breakdown of pathogens and signaling that strengthens the adaptive immune system. Non-enzymatic component of C3 and C5 convertases. Generated following cleavage by complement proteases (C1S, MASP2 or GZMK, depending on the complement pathway), it covalently attaches to the surface of pathogens, where it acts as an opsonin that marks the surface of antigens for removal. It then recruits the serine protease complement C2b to form the C3 and C5 convertases, which cleave and activate C3 and C5, respectively, the next components of the complement pathways. Complement C4b-A isotype is responsible for effective binding to form amide bonds with immune aggregates or protein antigens, while complement C4b-B isotype catalyzes the transacylation of the thioester carbonyl group to form ester bonds with carbohydrate antigens. In terms of biological role, putative humoral mediator released following cleavage by complement proteases (C1S, MASP2 or GZMK, depending on the complement pathway). While it is strongly similar to anaphylatoxins, its role is unclear. Was reported to act as a mediator of local inflammatory process; however these effects were probably due to contamination with C3a and/C5a anaphylatoxins in biological assays. The sequence is that of Complement C4-A from Mus musculus (Mouse).